The sequence spans 146 residues: 3-dehydroquinate dehydratase (146 aa).

Tyr23 (proton acceptor) is an active-site residue. The substrate site is built by Asn74, His80, and Asp87. Residue His100 is the Proton donor of the active site. Residues 101–102 (IS) and Arg111 each bind substrate.

Belongs to the type-II 3-dehydroquinase family. In terms of assembly, homododecamer.

It carries out the reaction 3-dehydroquinate = 3-dehydroshikimate + H2O. It participates in metabolic intermediate biosynthesis; chorismate biosynthesis; chorismate from D-erythrose 4-phosphate and phosphoenolpyruvate: step 3/7. Its function is as follows. Catalyzes a trans-dehydration via an enolate intermediate. This Bacillus cereus (strain G9842) protein is 3-dehydroquinate dehydratase.